Consider the following 200-residue polypeptide: Inner membrane-spanning protein YciB (200 aa).

Transmembrane regions (helical) follow at residues 7 to 27 (HPLF…FVNA), 32 to 52 (FAAT…SYVV), 56 to 76 (IPLM…LTLV), 93 to 113 (LFAA…AIMF), 126 to 146 (ILTF…EIIW), and 153 to 173 (FWVG…AIAQ).

The protein belongs to the YciB family.

Its subcellular location is the cell inner membrane. In terms of biological role, plays a role in cell envelope biogenesis, maintenance of cell envelope integrity and membrane homeostasis. This chain is Inner membrane-spanning protein YciB, found in Bradyrhizobium sp. (strain ORS 278).